We begin with the raw amino-acid sequence, 504 residues long: Putative BTB/POZ domain-containing protein R842 (504 aa).

Residues 21 to 91 (SDVKLILKDN…FYGFKSPSVT (71 aa)) enclose the BTB domain.

The protein belongs to the mimivirus BTB/WD family.

The polypeptide is Putative BTB/POZ domain-containing protein R842 (Acanthamoeba polyphaga (Amoeba)).